We begin with the raw amino-acid sequence, 207 residues long: Ras-related protein Rab-5B (207 aa).

The N-myristoyl glycine moiety is linked to residue G2. GTP is bound by residues G41–S49, S60–T66, D90–Q94, N148–D151, and S176–K178. The Effector region signature appears at H63–F71.

Belongs to the small GTPase superfamily. Rab family. In terms of assembly, interacts with CK1. May interact with ARF1. In terms of processing, myristoylation is required for cell membrane and food vacuole membrane localization. Post-translationally, may be palmitoylated on Cys-3. Lacks the C-terminal cysteine motifs subject to isoprenylation present in mammalian RAB5B homolog.

It localises to the cell membrane. The protein localises to the vacuole membrane. The protein resides in the vesicle. It carries out the reaction GTP + H2O = GDP + phosphate + H(+). Its activity is regulated as follows. Alternates between an inactive GDP-bound form and an active GTP-bound form. Activated by guanine nucleotide-exchange factors (GEFs) and inactivated by GTPase-activating proteins (GAPs). Its function is as follows. Small GTPase which regulates vesicle trafficking between organelles. May be involved in the trafficking of the N-myristoylated AK2 from the endoplasmic reticulum to the parasitophorous vacuole membrane. This is Ras-related protein Rab-5B from Plasmodium falciparum (isolate 3D7).